A 463-amino-acid chain; its full sequence is MERDFSGSPRVIADLGRIIDRLEALGRLVRVRSEVDPRHDLAGIAARFEGGPQAVLFEKVAGHAYPVFVGLYWSRELLGALFDQPETALPQHVAASIKSWQSAPVDPLVVADGPVLEVTEAEVDLSTLPIPIHALEDGGPYFDAAVVIAKDPETGVRNASIQRFQVIGKDRLVINIDAGRHLGLYLDKAAARGEPLAFTLNVGVGPGVHFAAAAPAEAAPVETDELGIASAFHGAPLELVAGTVGPVEMVAHAMWALECEIRPGEVHAEGPFAEVTGYYARVEPRPLVRVKRIHRRRAPIFHTLLSGAEVFNSVGLLGEANVLALLRVQVPGVEDVYFSHGGCGFYHCVVKIAQKRAGWAKQAILATFAAFPPLKMVTVVDEDVDIRNGRDVEWAMTTRLDAKTGILVIENAFGHGLNPTFPNYLGTKVGFDCTRPFPHTPAFDRAKTKAMTLDGLDIVGAKR.

Belongs to the UbiD family.

This is an uncharacterized protein from Rhodospirillum rubrum.